The chain runs to 411 residues: Adenylosuccinate synthetase (411 aa).

GTP-binding positions include Gly11–Lys17 and Gly39–Thr41. Asp12 functions as the Proton acceptor in the catalytic mechanism. Asp12 and Gly39 together coordinate Mg(2+). Residues Asp12–Lys15, Asn37–His40, Thr121, Arg135, Gln215, Thr230, and Arg294 contribute to the IMP site. The Proton donor role is filled by His40. Position 290–296 (Thr290–Arg296) interacts with substrate. Residues Arg296, Lys322 to Asp324, and Ser400 to Ser402 each bind GTP.

Belongs to the adenylosuccinate synthetase family. Homodimer. The cofactor is Mg(2+).

The protein resides in the cytoplasm. It catalyses the reaction IMP + L-aspartate + GTP = N(6)-(1,2-dicarboxyethyl)-AMP + GDP + phosphate + 2 H(+). It functions in the pathway purine metabolism; AMP biosynthesis via de novo pathway; AMP from IMP: step 1/2. Its function is as follows. Plays an important role in the de novo pathway of purine nucleotide biosynthesis. Catalyzes the first committed step in the biosynthesis of AMP from IMP. The sequence is that of Adenylosuccinate synthetase from Helicobacter pylori (strain G27).